The primary structure comprises 160 residues: Secreted RxLR effector protein 83 (160 aa).

A signal peptide spans Met1–Ala21. Residues Arg27–Arg30 carry the RxLR motif. Residues Asn39 and Asn131 are each glycosylated (N-linked (GlcNAc...) asparagine).

This sequence belongs to the RxLR effector family.

Its subcellular location is the secreted. It is found in the host nucleus. The protein resides in the host cytoplasm. In terms of biological role, secreted effector that completely suppresses the host cell death induced by cell death-inducing proteins. The protein is Secreted RxLR effector protein 83 of Plasmopara viticola (Downy mildew of grapevine).